The following is a 160-amino-acid chain: M-phase phosphoprotein 6 (160 aa).

Residues lysine 37 and lysine 86 each participate in a glycyl lysine isopeptide (Lys-Gly) (interchain with G-Cter in SUMO2) cross-link. Serine 110 bears the Phosphoserine mark. Positions 116 to 133 (RRYETLVGTIGKKFARKR) match the Nuclear localization signal motif. Lysine 127 is covalently cross-linked (Glycyl lysine isopeptide (Lys-Gly) (interchain with G-Cter in SUMO2)). Phosphothreonine is present on threonine 147. Residues lysine 150 and lysine 153 each participate in a glycyl lysine isopeptide (Lys-Gly) (interchain with G-Cter in SUMO2) cross-link.

The protein belongs to the MPP6 family. Associates with the RNA exosome complex, mediated by EXOSC3. Interacts with ARHGAP18. Interacts with exosome cofactors EXOSC10 and MTREX. Post-translationally, phosphorylated in M (mitotic) phase.

It is found in the nucleus. It localises to the nucleolus. The protein resides in the cytoplasm. In terms of biological role, RNA-binding protein that associates with the RNA exosome complex. Involved in the 3'-processing of the 7S pre-RNA to the mature 5.8S rRNA and play a role in recruiting the RNA exosome complex to pre-rRNA; this function may include C1D. The sequence is that of M-phase phosphoprotein 6 from Homo sapiens (Human).